Reading from the N-terminus, the 544-residue chain is Chaperonin GroEL (544 aa).

ATP is bound by residues 29–32 (TLGP), 86–90 (DGTTT), Gly-413, 476–478 (NAL), and Asp-492.

The protein belongs to the chaperonin (HSP60) family. As to quaternary structure, forms a cylinder of 14 subunits composed of two heptameric rings stacked back-to-back. Interacts with the co-chaperonin GroES.

Its subcellular location is the cytoplasm. The catalysed reaction is ATP + H2O + a folded polypeptide = ADP + phosphate + an unfolded polypeptide.. Its function is as follows. Together with its co-chaperonin GroES, plays an essential role in assisting protein folding. The GroEL-GroES system forms a nano-cage that allows encapsulation of the non-native substrate proteins and provides a physical environment optimized to promote and accelerate protein folding. This Desulfitobacterium hafniense (strain Y51) protein is Chaperonin GroEL.